We begin with the raw amino-acid sequence, 430 residues long: Protein translocase subunit SecY (430 aa).

A run of 10 helical transmembrane segments spans residues 18 to 38 (IFFT…PAPG), 68 to 88 (FSIF…MQLL), 117 to 137 (LAIS…NNYL), 147 to 167 (IMSY…LIWL), 179 to 199 (GISI…LIQF), 217 to 237 (VLGL…VLEA), 269 to 289 (GVIP…LTLF), 308 to 328 (NVGM…YAFV), 368 to 388 (FVGS…TKFM), and 389 to 409 (GLPQ…GVAI).

Belongs to the SecY/SEC61-alpha family. Component of the Sec protein translocase complex. Heterotrimer consisting of SecY, SecE and SecG subunits. The heterotrimers can form oligomers, although 1 heterotrimer is thought to be able to translocate proteins. Interacts with the ribosome. Interacts with SecDF, and other proteins may be involved. Interacts with SecA.

The protein localises to the cell membrane. The central subunit of the protein translocation channel SecYEG. Consists of two halves formed by TMs 1-5 and 6-10. These two domains form a lateral gate at the front which open onto the bilayer between TMs 2 and 7, and are clamped together by SecE at the back. The channel is closed by both a pore ring composed of hydrophobic SecY resides and a short helix (helix 2A) on the extracellular side of the membrane which forms a plug. The plug probably moves laterally to allow the channel to open. The ring and the pore may move independently. This chain is Protein translocase subunit SecY, found in Staphylococcus aureus (strain NCTC 8325 / PS 47).